Here is a 528-residue protein sequence, read N- to C-terminus: Calcium-dependent protein kinase 17 (528 aa).

Positions 1–65 are disordered; sequence MGNCCSHGRD…GPIGPVLGRP (65 aa). The N-myristoyl glycine moiety is linked to residue glycine 2. Positions 20–45 are enriched in low complexity; it reads NGASASNAANSTGPTAEASVPQSKHA. The region spanning 73 to 331 is the Protein kinase domain; it reads YSLGKELGRG…AAQVLNHPWI (259 aa). Residues 79–87 and lysine 102 contribute to the ATP site; that span reads LGRGQFGVT. Catalysis depends on aspartate 197, which acts as the Proton acceptor. Serine 237 carries the phosphoserine modification. An autoinhibitory domain region spans residues 337–367; it reads APDVPLDNAVMSRLKQFKAMNNFKKVALRVI. 4 EF-hand domains span residues 374–409, 410–445, 446–481, and 485–516; these read EEIM…QGTR, LSEY…INRL, DREE…FGMN, and DIKE…GNPD. Positions 387, 389, 391, 393, 398, 423, 425, 427, 429, 434, 459, 461, 463, 465, 470, 494, 496, 498, 500, and 505 each coordinate Ca(2+).

This sequence belongs to the protein kinase superfamily. Ser/Thr protein kinase family. CDPK subfamily.

It localises to the membrane. The catalysed reaction is L-seryl-[protein] + ATP = O-phospho-L-seryl-[protein] + ADP + H(+). It catalyses the reaction L-threonyl-[protein] + ATP = O-phospho-L-threonyl-[protein] + ADP + H(+). Its activity is regulated as follows. Activated by calcium. Autophosphorylation may play an important role in the regulation of the kinase activity. In terms of biological role, may play a role in signal transduction pathways that involve calcium as a second messenger. The polypeptide is Calcium-dependent protein kinase 17 (CPK17) (Arabidopsis thaliana (Mouse-ear cress)).